Consider the following 532-residue polypeptide: MYPVDGIRSQIEWNTTLNVSDAPVPTETTKYHRKTAIIATIGPKINTVEKLTDVRLAGVNIVRMNFSHGTHEYHQSVIDNTRQMIKNDPHGRPVAIALDTKGPEIRTGQTRDGNDYPIKAGDEFIVTTDPKYSDICDNKVLFVDYANLASVTAPGKLIYIDDGIISLLILSIDGMNLHVRALNNGTLSSRKGVNLPKTDVDLPPLSEKDKDDLRFGIRNGVDMIFASFIRRGEDVRQIREVLGPDGASIKIIVKIENEQGVANFDEILKEADGVMVARGDLGIEIPASQVFLAQKMMIAKCNIVGKPVIVATQMLESMTYNPRPTRAEVSDVANAVLDGSDCVMLSGETAKGSYPVQSVLMMAETCLLAETAICYPPLYDDLRAVQARPTETAETVAIAAVAAAAEQDAKALLVLSTSGETARLVSKYRPKIPIITVTRNEQTARQIHLHRGCYPFWYPEPRGVQNHQWQTDVDNRIRFGLRNALALNVIQPGASIIAVQGWKGGLGHTNTLRILTVPTDPADLELQPLGSL.

Arg63 provides a ligand contact to substrate. K(+) contacts are provided by Asn65, Ser67, Asp99, and Thr100. 65 to 68 (NFSH) serves as a coordination point for ATP. ATP is bound by residues Arg106 and Lys191. Glu256 is a binding site for Mg(2+). The substrate site is built by Gly279, Asp280, and Thr312. Residue Asp280 coordinates Mg(2+).

Belongs to the pyruvate kinase family. Homotetramer. It depends on Mg(2+) as a cofactor. The cofactor is K(+).

It carries out the reaction pyruvate + ATP = phosphoenolpyruvate + ADP + H(+). It functions in the pathway carbohydrate degradation; glycolysis; pyruvate from D-glyceraldehyde 3-phosphate: step 5/5. This chain is Pyruvate kinase (pkiA), found in Agaricus bisporus (White button mushroom).